Here is a 378-residue protein sequence, read N- to C-terminus: Monomethylxanthine methyltransferase 1 (378 aa).

S-adenosyl-L-homocysteine contacts are provided by Y18, C61, N66, D100, L101, S139, F140, and C156. Theobromine is bound by residues Y157, H160, and W161. Mg(2+)-binding residues include N178, D260, F262, and N263. Residue Y362 coordinates theobromine.

It belongs to the methyltransferase superfamily. Type-7 methyltransferase family. Requires Mg(2+) as cofactor. Expressed, at low levels, in stems, young leaves, floral buds and immature fruits (grains), but not in roots, old leaves and mature fruits.

It is found in the cytoplasm. It carries out the reaction 7-methylxanthine + S-adenosyl-L-methionine = theobromine + S-adenosyl-L-homocysteine + H(+). It participates in alkaloid biosynthesis. Functionally, involved in the biosynthesis of caffeine. Catalyzes the conversion of 7-methylxanthine (7mX) to theobromine and of paraxanthine to caffeine. Has a 5-fold preference for 7mX. In Coffea arabica (Arabian coffee), this protein is Monomethylxanthine methyltransferase 1.